Reading from the N-terminus, the 382-residue chain is D-galactonate dehydratase (382 aa).

Aspartate 183 serves as a coordination point for Mg(2+). Histidine 185 (proton donor) is an active-site residue. Positions 209 and 235 each coordinate Mg(2+). Histidine 285 functions as the Proton acceptor in the catalytic mechanism.

It belongs to the mandelate racemase/muconate lactonizing enzyme family. GalD subfamily. Requires Mg(2+) as cofactor.

It catalyses the reaction D-galactonate = 2-dehydro-3-deoxy-D-galactonate + H2O. It participates in carbohydrate acid metabolism; D-galactonate degradation; D-glyceraldehyde 3-phosphate and pyruvate from D-galactonate: step 1/3. In terms of biological role, catalyzes the dehydration of D-galactonate to 2-keto-3-deoxy-D-galactonate. The polypeptide is D-galactonate dehydratase (Salmonella gallinarum (strain 287/91 / NCTC 13346)).